Reading from the N-terminus, the 394-residue chain is Elongation factor Tu (394 aa).

One can recognise a tr-type G domain in the interval 10–204; sequence KPHVNVGTIG…FLDSYIPEPE (195 aa). Positions 19–26 are G1; that stretch reads GHVDHGKT. 19–26 is a GTP binding site; that stretch reads GHVDHGKT. Thr26 provides a ligand contact to Mg(2+). Residues 60–64 form a G2 region; sequence GITIN. A G3 region spans residues 81 to 84; sequence DCPG. Residues 81-85 and 136-139 each bind GTP; these read DCPGH and NKCD. The segment at 136 to 139 is G4; sequence NKCD. A G5 region spans residues 174–176; the sequence is SAL.

Belongs to the TRAFAC class translation factor GTPase superfamily. Classic translation factor GTPase family. EF-Tu/EF-1A subfamily. In terms of assembly, monomer.

It is found in the cytoplasm. It carries out the reaction GTP + H2O = GDP + phosphate + H(+). Its function is as follows. GTP hydrolase that promotes the GTP-dependent binding of aminoacyl-tRNA to the A-site of ribosomes during protein biosynthesis. In Salmonella arizonae (strain ATCC BAA-731 / CDC346-86 / RSK2980), this protein is Elongation factor Tu.